The sequence spans 183 residues: Akirin-1B (183 aa).

Residues 14–43 (EALMSPQSPKRRRCAPLPGSPATPSPQRCG) are disordered. The SYVS motif motif lies at 180–183 (SYVS).

This sequence belongs to the akirin family.

The protein localises to the nucleus. Molecular adapter that acts as a bridge between proteins, and which is involved skeletal muscle development. Functions as a signal transducer for MSTN during skeletal muscle regeneration and myogenesis. This is Akirin-1B (akirin1-b) from Xenopus laevis (African clawed frog).